We begin with the raw amino-acid sequence, 140 residues long: Putative pre-16S rRNA nuclease (140 aa).

Belongs to the YqgF nuclease family.

It localises to the cytoplasm. Its function is as follows. Could be a nuclease involved in processing of the 5'-end of pre-16S rRNA. The chain is Putative pre-16S rRNA nuclease from Actinobacillus succinogenes (strain ATCC 55618 / DSM 22257 / CCUG 43843 / 130Z).